Reading from the N-terminus, the 117-residue chain is Immunoglobulin kappa variable 1-9 (117 aa).

The signal sequence occupies residues 1–22 (MDMRVPAQLLGLLLLWLPGARC). The framework-1 stretch occupies residues 23–45 (DIQLTQSPSFLSASVGDRVTITC). The 94-residue stretch at 24 to 117 (IQLTQSPSFL…YYCQQLNSYP (94 aa)) folds into the Ig-like domain. C45 and C110 are joined by a disulfide. The complementarity-determining-1 stretch occupies residues 46–56 (RASQGISSYLA). The segment at 57 to 71 (WYQQKPGKAPKLLIY) is framework-2. Residues 72 to 78 (AASTLQS) are complementarity-determining-2. The segment at 79–110 (GVPSRFSGSGSGTEFTLTISSLQPEDFATYYC) is framework-3. The interval 111–117 (QQLNSYP) is complementarity-determining-3.

In terms of assembly, immunoglobulins are composed of two identical heavy chains and two identical light chains; disulfide-linked.

It localises to the secreted. Its subcellular location is the cell membrane. V region of the variable domain of immunoglobulin light chains that participates in the antigen recognition. Immunoglobulins, also known as antibodies, are membrane-bound or secreted glycoproteins produced by B lymphocytes. In the recognition phase of humoral immunity, the membrane-bound immunoglobulins serve as receptors which, upon binding of a specific antigen, trigger the clonal expansion and differentiation of B lymphocytes into immunoglobulins-secreting plasma cells. Secreted immunoglobulins mediate the effector phase of humoral immunity, which results in the elimination of bound antigens. The antigen binding site is formed by the variable domain of one heavy chain, together with that of its associated light chain. Thus, each immunoglobulin has two antigen binding sites with remarkable affinity for a particular antigen. The variable domains are assembled by a process called V-(D)-J rearrangement and can then be subjected to somatic hypermutations which, after exposure to antigen and selection, allow affinity maturation for a particular antigen. The polypeptide is Immunoglobulin kappa variable 1-9 (Homo sapiens (Human)).